Here is a 652-residue protein sequence, read N- to C-terminus: Maternal embryonic leucine zipper kinase (652 aa).

Positions 13–265 (YELHETIGTG…VKHLLSHPWL (253 aa)) constitute a Protein kinase domain. ATP contacts are provided by residues 19 to 27 (IGTGGFAKV) and Lys42. Asp134 functions as the Proton acceptor in the catalytic mechanism. A Phosphothreonine; by autocatalysis modification is found at Thr169. Position 173 is a phosphoserine; by autocatalysis (Ser173). Residues 284–323 (VDEDCVTELSVFYKCSRTSTSRLISEWNYDHITASYLLLH) are UBA-like. Positions 328 to 652 (HGKPVRLKRP…VEDILSSCKV (325 aa)) are autoinhibitory region. 5 positions are modified to phosphothreonine: Thr415, Thr450, Thr452, Thr482, and Thr484. The segment at 443-492 (FLHPAPWTPTPRRKQNEKKGILTTPNKNSHTKEKNQSKETPTKKPITTGE) is disordered. The span at 472–484 (HTKEKNQSKETPT) shows a compositional bias: basic and acidic residues. Residues Ser499, Ser506, and Ser518 each carry the phosphoserine modification. Residues 603–652 (SDFGKVTMQFELEVCQLSKSEMVGIRRQRLKGDAWVYKRLVEDILSSCKV) enclose the KA1 domain.

It belongs to the protein kinase superfamily. CAMK Ser/Thr protein kinase family. SNF1 subfamily. In terms of processing, autophosphorylated: autophosphorylation of the T-loop at Thr-169 and Ser-173 is required for activation. Phosphorylated by the maturation promoting factor (MPF), composed of cdk1 and a cyclin-B. Also phosphorylated by some MAPK. Phosphorylated during oocyte maturation. Dephosphorylation destabilizes the protein. Degraded when cells exit mitosis.

It is found in the cell membrane. It catalyses the reaction L-seryl-[protein] + ATP = O-phospho-L-seryl-[protein] + ADP + H(+). It carries out the reaction L-threonyl-[protein] + ATP = O-phospho-L-threonyl-[protein] + ADP + H(+). With respect to regulation, activated by autophosphorylation of the T-loop at Thr-169 and Ser-173: in contrast to other members of the SNF1 subfamily, phosphorylation at Thr-169 is not mediated by STK11/LKB1 but via autophosphorylation instead. Functionally, serine/threonine-protein kinase involved in various processes such as cell cycle regulation, self-renewal of stem cells, apoptosis and splicing regulation. Also plays a role in primitive hematopoiesis, possibly by affecting the expression of genes critical for hematopoiesis. Plays a role in cytokinesis during early development. In Xenopus tropicalis (Western clawed frog), this protein is Maternal embryonic leucine zipper kinase (melk).